We begin with the raw amino-acid sequence, 178 residues long: Interleukin-17B (178 aa).

An N-terminal signal peptide occupies residues Met-1–Pro-22. Residues Gln-21–Gln-44 are disordered. N-linked (GlcNAc...) asparagine glycosylation occurs at Asn-75. Cystine bridges form between Cys-121–Cys-176 and Cys-126–Cys-178.

Belongs to the IL-17 family.

The protein resides in the secreted. Stimulates the release of tumor necrosis factor alpha and IL-1-beta from the monocytic cell line THP-1. The sequence is that of Interleukin-17B (IL17B) from Mesocricetus auratus (Golden hamster).